A 512-amino-acid chain; its full sequence is UDP-N-acetylmuramate--L-alanine ligase (512 aa).

Residue 132–138 (GAHGKTT) coordinates ATP.

The protein belongs to the MurCDEF family.

It is found in the cytoplasm. It carries out the reaction UDP-N-acetyl-alpha-D-muramate + L-alanine + ATP = UDP-N-acetyl-alpha-D-muramoyl-L-alanine + ADP + phosphate + H(+). Its pathway is cell wall biogenesis; peptidoglycan biosynthesis. Its function is as follows. Cell wall formation. The polypeptide is UDP-N-acetylmuramate--L-alanine ligase (Bifidobacterium longum (strain DJO10A)).